A 184-amino-acid chain; its full sequence is Holliday junction branch migration complex subunit RuvA (184 aa).

Residues 1 to 64 (MIKAIEGVVT…EDANLLYGFL (64 aa)) form a domain I region. The domain II stretch occupies residues 65–134 (DANEQKMFEM…IAELSDTKLI (70 aa)). The segment at 134–137 (ISDE) is flexible linker. The interval 138 to 184 (SVPSYQNEALLALEALGFKREKIVKILPDCKSENTSDLIKEALKKLG) is domain III.

This sequence belongs to the RuvA family. In terms of assembly, homotetramer. Forms an RuvA(8)-RuvB(12)-Holliday junction (HJ) complex. HJ DNA is sandwiched between 2 RuvA tetramers; dsDNA enters through RuvA and exits via RuvB. An RuvB hexamer assembles on each DNA strand where it exits the tetramer. Each RuvB hexamer is contacted by two RuvA subunits (via domain III) on 2 adjacent RuvB subunits; this complex drives branch migration. In the full resolvosome a probable DNA-RuvA(4)-RuvB(12)-RuvC(2) complex forms which resolves the HJ.

The protein resides in the cytoplasm. Functionally, the RuvA-RuvB-RuvC complex processes Holliday junction (HJ) DNA during genetic recombination and DNA repair, while the RuvA-RuvB complex plays an important role in the rescue of blocked DNA replication forks via replication fork reversal (RFR). RuvA specifically binds to HJ cruciform DNA, conferring on it an open structure. The RuvB hexamer acts as an ATP-dependent pump, pulling dsDNA into and through the RuvAB complex. HJ branch migration allows RuvC to scan DNA until it finds its consensus sequence, where it cleaves and resolves the cruciform DNA. This is Holliday junction branch migration complex subunit RuvA from Campylobacter concisus (strain 13826).